We begin with the raw amino-acid sequence, 223 residues long: Putative germin-like protein 2-2 (223 aa).

The N-terminal stretch at 1–28 is a signal peptide; sequence MAAVGACFLQQLAVVALLALWCSHGAIA. Cysteines 38 and 53 form a disulfide. One can recognise a Cupin type-1 domain in the interval 67–217; sequence SGLHMAGNTT…AFQVDKNIID (151 aa). Residues Asn74 and Asn82 are each glycosylated (N-linked (GlcNAc...) asparagine). Residues His115, His117, Glu122, and His163 each contribute to the Mn(2+) site. An N-linked (GlcNAc...) asparagine glycan is attached at Asn168.

The protein belongs to the germin family. As to quaternary structure, oligomer (believed to be a pentamer but probably hexamer).

The protein localises to the secreted. It localises to the extracellular space. Its subcellular location is the apoplast. Its function is as follows. May play a role in plant defense. Probably has no oxalate oxidase activity even if the active site is conserved. The sequence is that of Putative germin-like protein 2-2 from Oryza sativa subsp. japonica (Rice).